Consider the following 141-residue polypeptide: Auxin-responsive protein SAUR61 (141 aa).

This sequence belongs to the ARG7 family.

It is found in the cell membrane. In terms of biological role, may promote auxin-stimulated organ elongation, such as hypocotyls, stamen filaments and petals. The sequence is that of Auxin-responsive protein SAUR61 from Arabidopsis thaliana (Mouse-ear cress).